A 164-amino-acid chain; its full sequence is Protein phosphatase 1 regulatory subunit 14C (164 aa).

Positions 1-19 (MSVVTGGGEAAGGTSGGGA) are enriched in gly residues. The segment at 1-72 (MSVVTGGGEA…QRRHQQGKVT (72 aa)) is disordered. Ser2 is subject to N-acetylserine. Ser25 bears the Phosphoserine mark. Omega-N-methylarginine is present on Arg27. Ser33 carries the post-translational modification Phosphoserine. The segment covering 50 to 62 (VATVAAAGQVQQQ) has biased composition (low complexity). At Thr72 the chain carries Phosphothreonine; by ILK1.

This sequence belongs to the PP1 inhibitor family. In terms of processing, has over 600-fold higher inhibitory activity when phosphorylated, creating a molecular switch for regulating the phosphorylation status of PPP1CA substrates and smooth muscle contraction. The main inhibitory site appears to be Thr-72.

The protein localises to the endomembrane system. Functionally, inhibitor of the PP1 regulatory subunit PPP1CA. In Rattus norvegicus (Rat), this protein is Protein phosphatase 1 regulatory subunit 14C (Ppp1r14c).